The sequence spans 388 residues: MTVYTSSATAPVNIATLKYWGKRDKSLNLPTNSSISVTLSQNDLRTLTSVAASEDFKEDKLWLNGKLESLESERTKACLADLRTLRKELESNDSSIPKLSQFGVHIVSENNFPTAAGLASSAAGFAALVVSIAKLYELPQNMSEISKIARKGSGSACRSLFGGYVAWEMGQETNGEDSKAVEVAPLSHWPNMKAAILVVSDDKKDTPSTSGMQTTVATSDLFQWRIKEVVPKRFDDMKDSILRKDFATFGDLTMKDSNSFHAVCLDSTPPIFYLNDTSKKIIKLIHELNKREGKIIAAYTFDAGPNAVIYYEQENESKVLGVIYKYFSKVSGWEKLDTKTLDTTSDIQADPELYKGVSKIILTEVGQGPQGSSESLINDKGLPKAVAN.

Residues 19-22 (YWGK), Arg74, 153-158 (SGSACR), and Thr209 contribute to the (R)-5-diphosphomevalonate site. Residues 367-388 (QGPQGSSESLINDKGLPKAVAN) form a disordered region.

This sequence belongs to the diphosphomevalonate decarboxylase family. Homodimer.

The enzyme catalyses (R)-5-diphosphomevalonate + ATP = isopentenyl diphosphate + ADP + phosphate + CO2. It participates in isoprenoid biosynthesis; isopentenyl diphosphate biosynthesis via mevalonate pathway; isopentenyl diphosphate from (R)-mevalonate: step 3/3. Functionally, diphosphomevalonate decarboxylase; part of the second module of ergosterol biosynthesis pathway that includes the middle steps of the pathway. The second module is carried out in the vacuole and involves the formation of farnesyl diphosphate, which is also an important intermediate in the biosynthesis of ubiquinone, dolichol, heme and prenylated proteins. Activity by the mevalonate kinase ERG12 first converts mevalonate into 5-phosphomevalonate. 5-phosphomevalonate is then further converted to 5-diphosphomevalonate by the phosphomevalonate kinase ERG8. The diphosphomevalonate decarboxylase MVD1/ERG19 then produces isopentenyl diphosphate. The isopentenyl-diphosphate delta-isomerase IDI1 then catalyzes the 1,3-allylic rearrangement of the homoallylic substrate isopentenyl (IPP) to its highly electrophilic allylic isomer, dimethylallyl diphosphate (DMAPP). Finally the farnesyl diphosphate synthase ERG20 catalyzes the sequential condensation of isopentenyl pyrophosphate with dimethylallyl pyrophosphate, and then with the resultant geranylpyrophosphate to the ultimate product farnesyl pyrophosphate. This Debaryomyces hansenii (strain ATCC 36239 / CBS 767 / BCRC 21394 / JCM 1990 / NBRC 0083 / IGC 2968) (Yeast) protein is Diphosphomevalonate decarboxylase.